The following is a 217-amino-acid chain: MQDNALTIALSKGRIFEETLPLLAAAGIVPTEEPEKSRKLIIGTNHENIRLVIVRATDVPTYVRYGAADFGIAGKDVLIEHGGTGLYRPLDLEIAKCRMMVAVRKGFDYEAASQPGCRLKIATKYPEIAASHFAGKGVHVDIIKLYGSMELAPLVGLSDAIVDLVSTGNTLKANGLEAVEHIVDISSRLVVNKAALKTKYALLEPIIQAFGGAVKAK.

It belongs to the ATP phosphoribosyltransferase family. Short subfamily. As to quaternary structure, heteromultimer composed of HisG and HisZ subunits.

It localises to the cytoplasm. It carries out the reaction 1-(5-phospho-beta-D-ribosyl)-ATP + diphosphate = 5-phospho-alpha-D-ribose 1-diphosphate + ATP. The protein operates within amino-acid biosynthesis; L-histidine biosynthesis; L-histidine from 5-phospho-alpha-D-ribose 1-diphosphate: step 1/9. Its function is as follows. Catalyzes the condensation of ATP and 5-phosphoribose 1-diphosphate to form N'-(5'-phosphoribosyl)-ATP (PR-ATP). Has a crucial role in the pathway because the rate of histidine biosynthesis seems to be controlled primarily by regulation of HisG enzymatic activity. This Neisseria meningitidis serogroup A / serotype 4A (strain DSM 15465 / Z2491) protein is ATP phosphoribosyltransferase (hisG).